The following is a 266-amino-acid chain: Ribosomal RNA small subunit methyltransferase A (266 aa).

Asn-11, Leu-13, Gly-37, Glu-57, Asp-85, and Asn-104 together coordinate S-adenosyl-L-methionine.

Belongs to the class I-like SAM-binding methyltransferase superfamily. rRNA adenine N(6)-methyltransferase family. RsmA subfamily.

The protein localises to the cytoplasm. It carries out the reaction adenosine(1518)/adenosine(1519) in 16S rRNA + 4 S-adenosyl-L-methionine = N(6)-dimethyladenosine(1518)/N(6)-dimethyladenosine(1519) in 16S rRNA + 4 S-adenosyl-L-homocysteine + 4 H(+). Functionally, specifically dimethylates two adjacent adenosines (A1518 and A1519) in the loop of a conserved hairpin near the 3'-end of 16S rRNA in the 30S particle. May play a critical role in biogenesis of 30S subunits. The sequence is that of Ribosomal RNA small subunit methyltransferase A from Campylobacter jejuni subsp. jejuni serotype O:2 (strain ATCC 700819 / NCTC 11168).